We begin with the raw amino-acid sequence, 537 residues long: MNQTKYIFVTGGVTSSLGKGIIAASLAKLLQGRGYRTTIQKFDPYINVDPGTLNPYEHGECYVTDDGAETDLDLGHYERFLNVPTSQANNVTTGRVYLSVIEKERRGEFLGKTVQVVPHITNEIKDRMQLLGKSGDYDIVITEIGGTVGDIESLPYIESVRQLVWELGENNGIVIHLTLVPYLAAAGELKTKPTQHSVKTLMESGIKADILVCRTEHELSQELRQKLALFCNVKKEAVIQSIDASTIYEVPNLMLEEGLDVVALKKLDLPKKASPDLKNWNTFLKRLKSPKQTVNIGLVGKYVEMQDCYKSILEAFIHAGAANETKVNVISIHSEHINADNVEEKLGTLDGVLVAPGFGERGIEGKIEAVRYVRENNIPFFGICLGMQMSVIEYSRNILGYADANSTEMNEKTPHPVVNLMEEQKNITDKGGTMRLGAWKCDIKPNTLAHRIYGEKTISERHRHRYEYNNKYADELQKAGLKASGVNPDTGLVEIVELENHPFFIGVQYHPEYKSTVANPHPIFVNFVAAAVNAHKK.

Residues Met1–Leu269 are amidoligase domain. Ser15 lines the CTP pocket. Ser15 serves as a coordination point for UTP. ATP is bound at residue Ser16–Ile21. Tyr56 is an L-glutamine binding site. Position 73 (Asp73) interacts with ATP. Residues Asp73 and Glu143 each coordinate Mg(2+). CTP contacts are provided by residues Asp150–Glu152, Lys190–Gln195, and Lys226. Residues Lys190 to Gln195 and Lys226 contribute to the UTP site. Positions Asn295–Lys537 constitute a Glutamine amidotransferase type-1 domain. Gly357 contributes to the L-glutamine binding site. Cys384 (nucleophile; for glutamine hydrolysis) is an active-site residue. L-glutamine-binding positions include Leu385 to Gln388, Glu408, and Arg465. Residues His510 and Glu512 contribute to the active site.

Belongs to the CTP synthase family. In terms of assembly, homotetramer.

It catalyses the reaction UTP + L-glutamine + ATP + H2O = CTP + L-glutamate + ADP + phosphate + 2 H(+). The catalysed reaction is L-glutamine + H2O = L-glutamate + NH4(+). It carries out the reaction UTP + NH4(+) + ATP = CTP + ADP + phosphate + 2 H(+). It functions in the pathway pyrimidine metabolism; CTP biosynthesis via de novo pathway; CTP from UDP: step 2/2. With respect to regulation, allosterically activated by GTP, when glutamine is the substrate; GTP has no effect on the reaction when ammonia is the substrate. The allosteric effector GTP functions by stabilizing the protein conformation that binds the tetrahedral intermediate(s) formed during glutamine hydrolysis. Inhibited by the product CTP, via allosteric rather than competitive inhibition. In terms of biological role, catalyzes the ATP-dependent amination of UTP to CTP with either L-glutamine or ammonia as the source of nitrogen. Regulates intracellular CTP levels through interactions with the four ribonucleotide triphosphates. The protein is CTP synthase of Flavobacterium johnsoniae (strain ATCC 17061 / DSM 2064 / JCM 8514 / BCRC 14874 / CCUG 350202 / NBRC 14942 / NCIMB 11054 / UW101) (Cytophaga johnsonae).